The chain runs to 345 residues: N-glycosylase/DNA lyase (345 aa).

DNA contacts are provided by Asn-149, Arg-154, and Arg-204. Catalysis depends on Lys-249, which acts as the Schiff-base intermediate with DNA. Residues Pro-266 and Asp-268 each contribute to the 8-oxoguanine site. The DNA site is built by His-270 and Gln-287. Positions 315 and 319 each coordinate 8-oxoguanine.

It belongs to the type-1 OGG1 family. In terms of tissue distribution, highest expression in testis.

The protein resides in the nucleus. It localises to the nucleoplasm. Its subcellular location is the nucleus speckle. It is found in the nucleus matrix. The catalysed reaction is 2'-deoxyribonucleotide-(2'-deoxyribose 5'-phosphate)-2'-deoxyribonucleotide-DNA = a 3'-end 2'-deoxyribonucleotide-(2,3-dehydro-2,3-deoxyribose 5'-phosphate)-DNA + a 5'-end 5'-phospho-2'-deoxyribonucleoside-DNA + H(+). Its function is as follows. DNA repair enzyme that incises DNA at 8-oxoG residues. Excises 7,8-dihydro-8-oxoguanine and 2,6-diamino-4-hydroxy-5-N-methylformamidopyrimidine (FAPY) from damaged DNA. Has a beta-lyase activity that nicks DNA 3' to the lesion. This is N-glycosylase/DNA lyase (Ogg1) from Mus musculus (Mouse).